Consider the following 28-residue polypeptide: Caerulein precursor fragment B1 (28 aa).

This sequence belongs to the gastrin/cholecystokinin family. In terms of tissue distribution, expressed by the skin glands.

It localises to the secreted. Peptide CPF-B1: Has antimicrobial activity against Gram-negative bacteria E.coli ATCC 25922 (MIC=5 uM) and multidrug-resistant A.baumannii (MIC=4-8 uM), against Gram-positive bacteria S.aureus ATCC 25923 (MIC=5 uM) and methicillin-resistant S.aureus and against fungus C.albicans ATCC 90028 (MIC=25 uM). Has some hemolytic activity against human erythrocytes at high concentrations. The protein is Caerulein precursor fragment B1 of Xenopus borealis (Kenyan clawed frog).